The chain runs to 107 residues: Large ribosomal subunit protein uL24 (107 aa).

The protein belongs to the universal ribosomal protein uL24 family. Part of the 50S ribosomal subunit.

Functionally, one of two assembly initiator proteins, it binds directly to the 5'-end of the 23S rRNA, where it nucleates assembly of the 50S subunit. Its function is as follows. One of the proteins that surrounds the polypeptide exit tunnel on the outside of the subunit. The chain is Large ribosomal subunit protein uL24 from Nitratidesulfovibrio vulgaris (strain DSM 19637 / Miyazaki F) (Desulfovibrio vulgaris).